The sequence spans 184 residues: MKNLTDSFVYLGHWPSAGSFGFNTDILATNPINLSVVFGVLIFFGKGVLNDLLDNRKQRILNTIRNSEELREGAIQQLENARARLRKVETEADQFRVNGYSEIEREKLNLINSTYKTLKQLENYKNETILFEQQRTINQVRERVFQQALQGAIGTLNSCLSHELHLRTINANIGMFGTMKEITD.

A helical membrane pass occupies residues L27 to L49.

The protein belongs to the ATPase B chain family. In terms of assembly, F-type ATPases have 2 components, F(1) - the catalytic core - and F(0) - the membrane proton channel. F(1) has five subunits: alpha(3), beta(3), gamma(1), delta(1), epsilon(1). F(0) has four main subunits: a(1), b(1), b'(1) and c(10-14). The alpha and beta chains form an alternating ring which encloses part of the gamma chain. F(1) is attached to F(0) by a central stalk formed by the gamma and epsilon chains, while a peripheral stalk is formed by the delta, b and b' chains.

The protein localises to the plastid. It is found in the chloroplast thylakoid membrane. In terms of biological role, f(1)F(0) ATP synthase produces ATP from ADP in the presence of a proton or sodium gradient. F-type ATPases consist of two structural domains, F(1) containing the extramembraneous catalytic core and F(0) containing the membrane proton channel, linked together by a central stalk and a peripheral stalk. During catalysis, ATP synthesis in the catalytic domain of F(1) is coupled via a rotary mechanism of the central stalk subunits to proton translocation. Functionally, component of the F(0) channel, it forms part of the peripheral stalk, linking F(1) to F(0). This Barbarea verna (Land cress) protein is ATP synthase subunit b, chloroplastic.